We begin with the raw amino-acid sequence, 507 residues long: Dihydrolipoyl dehydrogenase 1, mitochondrial (507 aa).

A mitochondrion-targeting transit peptide spans 1–36 (MAMASLARRKAYFLTRNLSNSPTDALRFSFSLSRGF). FAD is bound by residues 73 to 82 (EKRGALGGTC), lysine 91, glycine 155, and 184 to 186 (TGS). Cysteines 82 and 87 form a disulfide. Residues 221–228 (GAGYIGLE), glutamate 244, valine 278, and glycine 313 each bind NAD(+). FAD-binding positions include aspartate 354 and 360 to 363 (MLAH). Residue histidine 486 is the Proton acceptor of the active site.

It belongs to the class-I pyridine nucleotide-disulfide oxidoreductase family. As to quaternary structure, homodimer. Part of both the glycine cleavage system composed of four proteins: P, T, L and H and of the pyruvate dehydrogenase complex containing multiple copies of three enzymatic components: pyruvate dehydrogenase (E1), dihydrolipoamide acetyltransferase (E2) and lipoamide dehydrogenase (E3). FAD serves as cofactor. S-nytrosylated at unknown positions. Preferentially expressed in leaves, flowers and siliques and at a lower level in roots and stems.

It is found in the mitochondrion matrix. The enzyme catalyses N(6)-[(R)-dihydrolipoyl]-L-lysyl-[protein] + NAD(+) = N(6)-[(R)-lipoyl]-L-lysyl-[protein] + NADH + H(+). Lipoamide dehydrogenase is a component of the glycine decarboxylase (GDC) or glycine cleavage system as well as of the alpha-ketoacid dehydrogenase complexes. LPD1 is probably the protein most often associated with the glycine decarboxylase complex while LPD2 is probably incorporated into alpha-ketoacid dehydrogenase complexes. The protein is Dihydrolipoyl dehydrogenase 1, mitochondrial (LPD1) of Arabidopsis thaliana (Mouse-ear cress).